The sequence spans 333 residues: B3 domain-containing transcription factor NGA4 (333 aa).

Residues 36–145 constitute a DNA-binding region (TF-B3); it reads FDKVLTPSDV…KIMFIDWRPR (110 aa). Residues 268-333 form a disordered region; sequence VEESSSSGDT…YKRKGKSLEL (66 aa). The segment covering 323–333 has biased composition (basic and acidic residues); that stretch reads EYKRKGKSLEL.

The protein localises to the nucleus. Regulates lateral organ growth. Functionally redundant with NGA1, NGA2 and NGA3. This chain is B3 domain-containing transcription factor NGA4 (NGA4), found in Arabidopsis thaliana (Mouse-ear cress).